A 545-amino-acid chain; its full sequence is T-complex protein 1 subunit gamma (545 aa).

Methionine 1 carries the post-translational modification N-acetylmethionine. The interval 1–24 (MMGHRPVLVLSQNTKRESGRKVQS) is disordered. Serine 11 bears the Phosphoserine mark. Lysine 15 is covalently cross-linked (Glycyl lysine isopeptide (Lys-Gly) (interchain with G-Cter in SUMO2)). ADP is bound at residue glycine 42. An ATP-binding site is contributed by glycine 42. Residue aspartate 93 coordinates Mg(2+). Residues glycine 94, threonine 95, threonine 96, serine 97, threonine 162, and lysine 163 each contribute to the ADP site. ATP-binding residues include glycine 94, threonine 95, and threonine 96. Phosphoserine is present on serine 170. At lysine 222 the chain carries N6-acetyllysine. 2 positions are modified to phosphoserine: serine 243 and serine 244. Residue tyrosine 247 is modified to Phosphotyrosine. Residues lysine 248 and lysine 249 each participate in a glycyl lysine isopeptide (Lys-Gly) (interchain with G-Cter in SUMO2) cross-link. Serine 252 carries the phosphoserine modification. An intrachain disulfide couples cysteine 366 to cysteine 372. Residue lysine 381 forms a Glycyl lysine isopeptide (Lys-Gly) (interchain with G-Cter in SUMO2) linkage. Glycine 411 is a binding site for ADP. Residue glycine 411 coordinates ATP. Residues threonine 430 and threonine 459 each carry the phosphothreonine modification. Positions 482, 483, 497, and 502 each coordinate ADP. Glycine 482 is an ATP binding site. Glutamate 497 is a binding site for ATP. The tract at residues 526-545 (HKKKGDDQNRQTGAPDAGQE) is disordered.

Belongs to the TCP-1 chaperonin family. As to quaternary structure, component of the chaperonin-containing T-complex (TRiC), a hexadecamer composed of two identical back-to-back stacked rings enclosing a protein folding chamber. Each ring is made up of eight different subunits: TCP1/CCT1, CCT2, CCT3, CCT4, CCT5, CCT6A/CCT6, CCT7, CCT8. Interacts with PACRG. Interacts with DNAAF4. Interacts with DLEC1. Post-translationally, the N-terminus is blocked.

The protein resides in the cytoplasm. It carries out the reaction ATP + H2O = ADP + phosphate + H(+). In terms of biological role, component of the chaperonin-containing T-complex (TRiC), a molecular chaperone complex that assists the folding of actin, tubulin and other proteins upon ATP hydrolysis. The TRiC complex mediates the folding of WRAP53/TCAB1, thereby regulating telomere maintenance. As part of the TRiC complex may play a role in the assembly of BBSome, a complex involved in ciliogenesis regulating transports vesicles to the cilia. The protein is T-complex protein 1 subunit gamma (Cct3) of Mus musculus (Mouse).